Here is a 309-residue protein sequence, read N- to C-terminus: Dihydroorotate dehydrogenase B (NAD(+)), catalytic subunit (309 aa).

FMN-binding positions include S21 and 45–46 (KA). Residues K45 and 69-73 (NAIGL) contribute to the substrate site. Residues N99 and N127 each contribute to the FMN site. A substrate-binding site is contributed by N127. C130 (nucleophile) is an active-site residue. Residues K165 and I191 each coordinate FMN. 192–193 (NT) lines the substrate pocket. Residues G217, 243–244 (GG), and 265–266 (GT) each bind FMN.

It belongs to the dihydroorotate dehydrogenase family. Type 1 subfamily. Heterotetramer of 2 PyrK and 2 PyrD type B subunits. FMN serves as cofactor.

The protein localises to the cytoplasm. The catalysed reaction is (S)-dihydroorotate + NAD(+) = orotate + NADH + H(+). It functions in the pathway pyrimidine metabolism; UMP biosynthesis via de novo pathway; orotate from (S)-dihydroorotate (NAD(+) route): step 1/1. Catalyzes the conversion of dihydroorotate to orotate with NAD(+) as electron acceptor. This chain is Dihydroorotate dehydrogenase B (NAD(+)), catalytic subunit (pyrD), found in Bacillus thuringiensis (strain Al Hakam).